Here is a 383-residue protein sequence, read N- to C-terminus: Paralemmin-1 (383 aa).

At Met1 the chain carries N-acetylmethionine. The stretch at 7 to 101 (DTVSQQERLQ…EKEIDVLEFG (95 aa)) forms a coiled coil. Disordered stretches follow at residues 51–164 (RERW…STMM), 242–293 (TLSE…QPGQ), and 333–374 (SVTP…DMKK). Over residues 69-96 (DMRKQMQEDEQKARSLEESITRLEKEID) the composition is skewed to basic and acidic residues. Phosphoserine is present on residues Ser116, Ser122, and Ser124. The span at 133–143 (ETMVNAQQTPL) shows a compositional bias: polar residues. 3 positions are modified to phosphothreonine: Thr141, Thr145, and Thr153. 2 positions are modified to phosphoserine: Ser157 and Ser161. A Phosphothreonine modification is found at Thr242. Ser244 bears the Phosphoserine mark. Positions 257 to 273 (GLAEDVTRTTPSRREIT) are enriched in basic and acidic residues. Ser345 carries the phosphoserine modification. Residues 357 to 367 (QTGPTTTPSDT) are compositionally biased toward polar residues. Phosphothreonine occurs at positions 361, 362, and 363. Ser365 carries the post-translational modification Phosphoserine. Thr367 carries the phosphothreonine modification. Residues Cys377 and Cys379 are each lipidated (S-palmitoyl cysteine). Cys380 carries the cysteine methyl ester modification. A lipid anchor (S-farnesyl cysteine) is attached at Cys380. Residues 381-383 (SVM) constitute a propeptide, removed in mature form.

The protein belongs to the paralemmin family. Interacts with dopamine receptor DRD3. As to expression, expressed in neurons cells of neuropil-rich areas of the brain, in the Purkinje cells of the cerebellum, in cells of the cerebral cortex, hippocampus, brainstem nuclei and glial processes and sheaths. Expressed in the medulla of the adrenal chromaffin cells and renal duct cells (at protein level).

The protein resides in the cell membrane. Its subcellular location is the cell projection. It is found in the filopodium membrane. It localises to the axon. The protein localises to the dendrite. The protein resides in the dendritic spine. Its subcellular location is the basolateral cell membrane. It is found in the apicolateral cell membrane. In terms of biological role, involved in plasma membrane dynamics and cell process formation. Necessary for axonal and dendritic filopodia induction, for dendritic spine maturation and synapse formation in a palmitoylation-dependent manner. The sequence is that of Paralemmin-1 (Palm) from Rattus norvegicus (Rat).